The sequence spans 373 residues: Spore germination protein KB (373 aa).

Transmembrane regions (helical) follow at residues 11–31 (LFVMIIIFELGSSLLITPGSM), 37–57 (WIAVLLGCAIGLFLFYLYQGI), 78–98 (LSWLFSFLYILYFAYIAARVL), 105–125 (LLTFAYHDTPIIIVNALLMVV), 143–163 (LLFGAMYLLGAIGLVLIIVSG), 185–205 (VFTQTMYVPFGEVVLFVMIFP), 219–239 (IAMAISGLIVALTVAINISVL), 269–289 (VFFMLALIIGGFFKVSLYLYA), 306–326 (LAYPMGLGILILSITIATNFS), and 338–358 (LYIHLPFQLLFPLFLFIVAVW).

The protein belongs to the amino acid-polyamine-organocation (APC) superfamily. Spore germination protein (SGP) (TC 2.A.3.9) family.

The protein resides in the cell membrane. Functionally, involved in the germination response to the combination of glucose, fructose, L-asparagine, and KCl. This Bacillus subtilis (strain 168) protein is Spore germination protein KB (gerKB).